Consider the following 86-residue polypeptide: Cell division topological specificity factor (86 aa).

This sequence belongs to the MinE family.

Its function is as follows. Prevents the cell division inhibition by proteins MinC and MinD at internal division sites while permitting inhibition at polar sites. This ensures cell division at the proper site by restricting the formation of a division septum at the midpoint of the long axis of the cell. The sequence is that of Cell division topological specificity factor from Parasynechococcus marenigrum (strain WH8102).